The primary structure comprises 261 residues: Kallikrein 1-related peptidase b8 (261 aa).

The signal sequence occupies residues 1 to 18 (MRFLILFLALSLGGIDAA). The propeptide at 19-24 (PPLQSR) is activation peptide. One can recognise a Peptidase S1 domain in the interval 25-258 (VVGGFNCEKN…FNSWIKDTMT (234 aa)). Intrachain disulfides connect Cys-31/Cys-173, Cys-50/Cys-66, Cys-152/Cys-219, Cys-184/Cys-198, and Cys-209/Cys-234. The Charge relay system role is filled by His-65. Residue Asn-102 is glycosylated (N-linked (GlcNAc...) asparagine). Asp-120 (charge relay system) is an active-site residue. Ser-213 acts as the Charge relay system in catalysis.

This sequence belongs to the peptidase S1 family. Kallikrein subfamily.

The catalysed reaction is Preferential cleavage of Arg-|-Xaa bonds in small molecule substrates. Highly selective action to release kallidin (lysyl-bradykinin) from kininogen involves hydrolysis of Met-|-Xaa or Leu-|-Xaa.. Glandular kallikreins cleave Met-Lys and Arg-Ser bonds in kininogen to release Lys-bradykinin. This chain is Kallikrein 1-related peptidase b8 (Klk1b8), found in Mus musculus (Mouse).